The primary structure comprises 340 residues: Glycerol-3-phosphate dehydrogenase [NAD(P)+] (340 aa).

Positions 14, 15, 35, and 108 each coordinate NADPH. Sn-glycerol 3-phosphate-binding residues include K108 and G136. NADPH is bound at residue A140. 5 residues coordinate sn-glycerol 3-phosphate: K191, D244, S254, R255, and N256. The active-site Proton acceptor is the K191. R255 provides a ligand contact to NADPH. NADPH is bound by residues V279 and E281.

It belongs to the NAD-dependent glycerol-3-phosphate dehydrogenase family.

The protein localises to the cytoplasm. The enzyme catalyses sn-glycerol 3-phosphate + NAD(+) = dihydroxyacetone phosphate + NADH + H(+). It carries out the reaction sn-glycerol 3-phosphate + NADP(+) = dihydroxyacetone phosphate + NADPH + H(+). It functions in the pathway membrane lipid metabolism; glycerophospholipid metabolism. Catalyzes the reduction of the glycolytic intermediate dihydroxyacetone phosphate (DHAP) to sn-glycerol 3-phosphate (G3P), the key precursor for phospholipid synthesis. This chain is Glycerol-3-phosphate dehydrogenase [NAD(P)+], found in Ectopseudomonas mendocina (strain ymp) (Pseudomonas mendocina).